We begin with the raw amino-acid sequence, 724 residues long: Threonine--tRNA ligase 2, cytoplasmic (724 aa).

Residue Ala-2 is modified to N-acetylalanine. The stretch at 44 to 72 forms a coiled coil; that stretch reads QAEGPCLTREVAQLRAENRELRHCLYRLR. The interval 90–112 is disordered; that stretch reads RAEAGRAAAGAQPPPSQSLEEDV. The TGS domain maps to 155 to 220; sequence DSSNVITVRV…EGDATVELLT (66 aa). Ser-451 is modified (phosphoserine).

This sequence belongs to the class-II aminoacyl-tRNA synthetase family. As to quaternary structure, may be a component of the multisynthetase complex (MSC), a large multi-subunit complex which contains at least eight different aminoacyl-tRNA synthetases plus three auxillary subunits AIMP1, AIMP2 and EEF1E1. Interacts with the MSC components EPRS1, AIMP1, AIMP2 and KARS1.

It is found in the cytoplasm. Its subcellular location is the nucleus. It carries out the reaction tRNA(Thr) + L-threonine + ATP = L-threonyl-tRNA(Thr) + AMP + diphosphate + H(+). In terms of biological role, catalyzes the attachment of threonine to tRNA(Thr) in a two-step reaction: threonine is first activated by ATP to form Thr-AMP and then transferred to the acceptor end of tRNA(Thr). Also edits incorrectly charged tRNA(Thr) via its editing domain, at the post-transfer stage. The chain is Threonine--tRNA ligase 2, cytoplasmic (TARS3) from Bos taurus (Bovine).